The following is a 334-amino-acid chain: N-chimaerin (334 aa).

A compositionally biased stretch (polar residues) spans 1–10 (MPSKESWSGR). Residues 1-22 (MPSKESWSGRKTNRATVHKSKQ) are disordered. Thr67 bears the Phosphothreonine mark. Residues 80–130 (VHNFKVHTFRGPHWCEYCANFMWGLIAQGVKCADCGLNVHKQCSKMVPNDC) form a Phorbol-ester/DAG-type zinc finger. The region spanning 143-334 (CDLTTLVKAH…LLIKNEDILF (192 aa)) is the Rho-GAP domain. Position 215 is a phosphothreonine (Thr215).

Interacts with EPHA4; effector of EPHA4 in axon guidance linking EPHA4 activation to RAC1 regulation. In terms of processing, phosphorylated. Phosphorylation is EPHA4 kinase activity-dependent. As to expression, in neurons in brain regions that are involved in learning and memory processes.

Functionally, GTPase-activating protein for p21-rac and a phorbol ester receptor. Involved in the assembly of neuronal locomotor circuits as a direct effector of EPHA4 in axon guidance. The chain is N-chimaerin (Chn1) from Rattus norvegicus (Rat).